Consider the following 156-residue polypeptide: Ribosomal RNA large subunit methyltransferase H (156 aa).

S-adenosyl-L-methionine contacts are provided by residues leucine 73, glycine 104, and 123 to 128 (ISSMTL).

The protein belongs to the RNA methyltransferase RlmH family. Homodimer.

It localises to the cytoplasm. It carries out the reaction pseudouridine(1915) in 23S rRNA + S-adenosyl-L-methionine = N(3)-methylpseudouridine(1915) in 23S rRNA + S-adenosyl-L-homocysteine + H(+). In terms of biological role, specifically methylates the pseudouridine at position 1915 (m3Psi1915) in 23S rRNA. This is Ribosomal RNA large subunit methyltransferase H from Burkholderia cenocepacia (strain HI2424).